A 189-amino-acid polypeptide reads, in one-letter code: Chitin synthase 1 (189 aa).

It belongs to the chitin synthase family. Class I subfamily.

The protein localises to the cell membrane. It carries out the reaction [(1-&gt;4)-N-acetyl-beta-D-glucosaminyl](n) + UDP-N-acetyl-alpha-D-glucosamine = [(1-&gt;4)-N-acetyl-beta-D-glucosaminyl](n+1) + UDP + H(+). In terms of biological role, polymerizes chitin, a structural polymer of the cell wall and septum, by transferring the sugar moiety of UDP-GlcNAc to the non-reducing end of the growing chitin polymer. The chain is Chitin synthase 1 (CHS1) from Exophiala jeanselmei (Dematiaceous fungus).